The sequence spans 372 residues: Cytoplasmic tRNA 2-thiolation protein 1 (372 aa).

The segment at Gly-335–Phe-372 is disordered. A compositionally biased stretch (gly residues) spans Gly-341–Cys-351. Residues Glu-361–Phe-372 show a composition bias toward basic and acidic residues.

The protein belongs to the TtcA family. CTU1/NCS6/ATPBD3 subfamily.

It is found in the cytoplasm. Its pathway is tRNA modification; 5-methoxycarbonylmethyl-2-thiouridine-tRNA biosynthesis. Plays a central role in 2-thiolation of mcm(5)S(2)U at tRNA wobble positions of tRNA(Lys), tRNA(Glu) and tRNA(Gln). Directly binds tRNAs and probably acts by catalyzing adenylation of tRNAs, an intermediate required for 2-thiolation. It is unclear whether it acts as a sulfurtransferase that transfers sulfur from thiocarboxylated URM1 onto the uridine of tRNAs at wobble position. The sequence is that of Cytoplasmic tRNA 2-thiolation protein 1 from Caenorhabditis briggsae.